The following is a 530-amino-acid chain: MEQARPIRRALLSVSDKTGILEFAKALNERGVALLSTGGTAKLLGDAGLPVTEVSDYTGFPEMMDGRVKTLHPKVHGGILGRRDQDDAIMAQHNIYPIDMVVVNLYPFAATVAKAGCSLADAVENIDIGGPTMVRSAAKNHKDVAIVVKAADYARVIAEMDANGNSLKLATRFDLAIAAFEHTAAYDGMIANYFGTMVPSYGDNKEGDAESRFPRTFNSQFIKKQDMRYGENSHQAAAFYAEEHATPGSVSSAIQLQGKALSYNNIADTDAALECVKEFSEPACVIVKHANPCGVAIGDDLLTAYDRAYQTDPTSAFGGIIAFNRELDGATAAAIVARQFVEVIIAPSVSQEARDVVAAKQNVRLLECGQWTAPAQGFDLKRVNGGLLIQERDFGMVTQGDLKVVSKRQPTEAELKDLLFCWKVAKFVKSNAIVYAKEGQTIGVGAGQMSRVYSAKIAGIKAEDEGLTVAGSVMASDAFFPFRDGIDAAAAAGISCVIQPGGSMRDQEVIDAADEHGMTMVFTNMRHFRH.

In terms of domain architecture, MGS-like spans 1-148 (MEQARPIRRA…KNHKDVAIVV (148 aa)).

This sequence belongs to the PurH family.

The catalysed reaction is (6R)-10-formyltetrahydrofolate + 5-amino-1-(5-phospho-beta-D-ribosyl)imidazole-4-carboxamide = 5-formamido-1-(5-phospho-D-ribosyl)imidazole-4-carboxamide + (6S)-5,6,7,8-tetrahydrofolate. The enzyme catalyses IMP + H2O = 5-formamido-1-(5-phospho-D-ribosyl)imidazole-4-carboxamide. It participates in purine metabolism; IMP biosynthesis via de novo pathway; 5-formamido-1-(5-phospho-D-ribosyl)imidazole-4-carboxamide from 5-amino-1-(5-phospho-D-ribosyl)imidazole-4-carboxamide (10-formyl THF route): step 1/1. The protein operates within purine metabolism; IMP biosynthesis via de novo pathway; IMP from 5-formamido-1-(5-phospho-D-ribosyl)imidazole-4-carboxamide: step 1/1. This chain is Bifunctional purine biosynthesis protein PurH, found in Aeromonas salmonicida (strain A449).